The sequence spans 525 residues: G patch domain-containing protein 3 (525 aa).

Disordered stretches follow at residues 54–85 (ERGP…PASD) and 246–317 (EQEE…QERT). The segment covering 274 to 299 (DEPEDEGQQQEEEEESGSEEDDDRGE) has biased composition (acidic residues). Basic and acidic residues predominate over residues 300–317 (EWERHEALHEDVTGQERT). One can recognise a G-patch domain in the interval 411-459 (TKGIGRKVMERQGWAEGQGLGSRCSGVPEALDGDGQHPRCKRGLGYHGE).

In terms of assembly, interacts with mitochondrial MAVS; the interaction is markedly increased upon viral infection.

The protein resides in the nucleus. Its subcellular location is the cytoplasm. Involved in transcriptional regulation. It is able to activate transcription from CXCR4 promoter and therefore it might control neural crest cell migration involved in ocular and craniofacial development. Is a negative regulator of immune antiviral response, acting via down-regulation of RIG-I-like receptors signaling and inhibition of type I interferon production. The control mechanism involves interaction with mitochondrial MAVS and inhibition of MAVS assembly with downstream proteins implicated in antiviral response, such as TBK1 and TRAF6. The chain is G patch domain-containing protein 3 (Gpatch3) from Mus musculus (Mouse).